The following is a 298-amino-acid chain: Tryptophan 2,3-dioxygenase (298 aa).

Substrate contacts are provided by residues 51–55 (FIIQH), Y113, and R117. H240 is a binding site for heme. Residue T254 participates in substrate binding.

Belongs to the tryptophan 2,3-dioxygenase family. As to quaternary structure, homotetramer. Heme serves as cofactor.

It catalyses the reaction L-tryptophan + O2 = N-formyl-L-kynurenine. Its pathway is amino-acid degradation; L-tryptophan degradation via kynurenine pathway; L-kynurenine from L-tryptophan: step 1/2. Heme-dependent dioxygenase that catalyzes the oxidative cleavage of the L-tryptophan (L-Trp) pyrrole ring and converts L-tryptophan to N-formyl-L-kynurenine. Catalyzes the oxidative cleavage of the indole moiety. This is Tryptophan 2,3-dioxygenase from Xanthomonas euvesicatoria pv. vesicatoria (strain 85-10) (Xanthomonas campestris pv. vesicatoria).